A 332-amino-acid polypeptide reads, in one-letter code: Protein FAM131B (332 aa).

The segment at 1–22 (MDSTSSLHGSSLHRPSTEQTRT) is disordered. At S47 the chain carries Phosphoserine. A disordered region spans residues 95–114 (PTIQPQHSHEAVRRDTDAYS). Basic and acidic residues predominate over residues 101-111 (HSHEAVRRDTD). Phosphoserine occurs at positions 114 and 117. The tract at residues 221–332 (LGPAFDDSQP…FDEEEGDANN (112 aa)) is disordered. Basic and acidic residues-rich tracts occupy residues 272–281 (PVEEEKRPLA) and 288–302 (AGCR…REDP). S295, S297, and S313 each carry phosphoserine. The residue at position 316 (T316) is a Phosphothreonine. Phosphoserine is present on residues S317, S318, and S322. Over residues 323-332 (FDEEEGDANN) the composition is skewed to acidic residues.

It belongs to the FAM131 family.

The polypeptide is Protein FAM131B (Fam131b) (Mus musculus (Mouse)).